The following is a 270-amino-acid chain: MNKPFDKLKLHGFNNLTKSLSFSIYDICYAKTEQQRKEYIEYIDEQYSADRLTDILGEVVDIIGANILNVARQDYEPQGASVTILVSEEPVEEQQNYDADEAPGPLPDSVVAHLDKSHICVHTYPEAHPDDGICTFRADIEVSTCGIISPLKALNFLIHSLESDVVTIDYRVRGFTRDINGVKHYIDHAISSIQNFMTEDTKEAYQMMDVNVYQENLFHTKMMLKETDLNTYLFGLSTDDLSDEEEEEIRSKLTREMQEIFYGRNLPDLD.

S117 functions as the Schiff-base intermediate with substrate; via pyruvic acid in the catalytic mechanism. S117 carries the post-translational modification Pyruvic acid (Ser); by autocatalysis. H122 functions as the Proton acceptor; for processing activity in the catalytic mechanism. Catalysis depends on C145, which acts as the Proton donor; for catalytic activity.

It belongs to the prokaryotic AdoMetDC family. Type 2 subfamily. Heterooctamer of four alpha and four beta chains arranged as a tetramer of alpha/beta heterodimers. Pyruvate is required as a cofactor. In terms of processing, is synthesized initially as an inactive proenzyme. Formation of the active enzyme involves a self-maturation process in which the active site pyruvoyl group is generated from an internal serine residue via an autocatalytic post-translational modification. Two non-identical subunits are generated from the proenzyme in this reaction, and the pyruvate is formed at the N-terminus of the alpha chain, which is derived from the carboxyl end of the proenzyme. The post-translation cleavage follows an unusual pathway, termed non-hydrolytic serinolysis, in which the side chain hydroxyl group of the serine supplies its oxygen atom to form the C-terminus of the beta chain, while the remainder of the serine residue undergoes an oxidative deamination to produce ammonia and the pyruvoyl group blocking the N-terminus of the alpha chain.

The catalysed reaction is S-adenosyl-L-methionine + H(+) = S-adenosyl 3-(methylsulfanyl)propylamine + CO2. It functions in the pathway amine and polyamine biosynthesis; S-adenosylmethioninamine biosynthesis; S-adenosylmethioninamine from S-adenosyl-L-methionine: step 1/1. Functionally, catalyzes the decarboxylation of S-adenosylmethionine to S-adenosylmethioninamine (dcAdoMet), the propylamine donor required for the synthesis of the polyamines spermine and spermidine from the diamine putrescine. The protein is S-adenosylmethionine decarboxylase proenzyme of Pseudoalteromonas translucida (strain TAC 125).